A 416-amino-acid chain; its full sequence is Phosphoglycerate kinase (416 aa).

V23, D24, F25, N26, Q38, R39, S62, H63, G65, R66, L121, R122, H169, and R170 together coordinate (2R)-3-phosphoglycerate. G213 is an ADP binding site. G213 contacts CDP. Residues A214 and K215 each contribute to the AMP site. A214 is an ATP binding site. Residue A214 participates in Mg(2+) binding. D218 serves as a coordination point for CDP. Position 218 (D218) interacts with Mg(2+). K219 serves as a coordination point for AMP. Residue K219 participates in ATP binding. Residue G237 coordinates ADP. CDP is bound at residue G237. AMP contacts are provided by G238 and G312. ATP is bound by residues G238 and G312. 3 residues coordinate CDP: G337, A339, and F342. F342 serves as a coordination point for ADP. E343 is a binding site for AMP. ATP-binding residues include E343, D374, and T375. D374 is a Mg(2+) binding site.

This sequence belongs to the phosphoglycerate kinase family. Monomer. It depends on Mg(2+) as a cofactor.

The protein localises to the cytoplasm. Its subcellular location is the mitochondrion. The enzyme catalyses (2R)-3-phosphoglycerate + ATP = (2R)-3-phospho-glyceroyl phosphate + ADP. It participates in carbohydrate degradation; glycolysis; pyruvate from D-glyceraldehyde 3-phosphate: step 2/5. Its function is as follows. Catalyzes one of the two ATP producing reactions in the glycolytic pathway via the reversible conversion of 1,3-diphosphoglycerate to 3-phosphoglycerate. Both L- and D- forms of purine and pyrimidine nucleotides can be used as substrates, but the activity is much lower on pyrimidines. Negatively regulates the biosynthesis of acetyl-CoA from pyruvate in the mitochondrion. The protein is Phosphoglycerate kinase (PGK) of Funneliformis mosseae (Endomycorrhizal fungus).